The following is a 244-amino-acid chain: NAD(P)H-quinone oxidoreductase subunit K (244 aa).

[4Fe-4S] cluster-binding residues include cysteine 51, cysteine 52, cysteine 116, and cysteine 147.

This sequence belongs to the complex I 20 kDa subunit family. In terms of assembly, NDH-1 can be composed of about 15 different subunits; different subcomplexes with different compositions have been identified which probably have different functions. Requires [4Fe-4S] cluster as cofactor.

It localises to the cellular thylakoid membrane. The enzyme catalyses a plastoquinone + NADH + (n+1) H(+)(in) = a plastoquinol + NAD(+) + n H(+)(out). The catalysed reaction is a plastoquinone + NADPH + (n+1) H(+)(in) = a plastoquinol + NADP(+) + n H(+)(out). Its function is as follows. NDH-1 shuttles electrons from an unknown electron donor, via FMN and iron-sulfur (Fe-S) centers, to quinones in the respiratory and/or the photosynthetic chain. The immediate electron acceptor for the enzyme in this species is believed to be plastoquinone. Couples the redox reaction to proton translocation, and thus conserves the redox energy in a proton gradient. Cyanobacterial NDH-1 also plays a role in inorganic carbon-concentration. The polypeptide is NAD(P)H-quinone oxidoreductase subunit K (Synechococcus sp. (strain JA-2-3B'a(2-13)) (Cyanobacteria bacterium Yellowstone B-Prime)).